The primary structure comprises 253 residues: Ubiquinone biosynthesis O-methyltransferase (253 aa).

Positions 47, 78, 99, and 141 each coordinate S-adenosyl-L-methionine.

It belongs to the methyltransferase superfamily. UbiG/COQ3 family.

It catalyses the reaction a 3-demethylubiquinol + S-adenosyl-L-methionine = a ubiquinol + S-adenosyl-L-homocysteine + H(+). The enzyme catalyses a 3-(all-trans-polyprenyl)benzene-1,2-diol + S-adenosyl-L-methionine = a 2-methoxy-6-(all-trans-polyprenyl)phenol + S-adenosyl-L-homocysteine + H(+). Its pathway is cofactor biosynthesis; ubiquinone biosynthesis. Functionally, O-methyltransferase that catalyzes the 2 O-methylation steps in the ubiquinone biosynthetic pathway. The protein is Ubiquinone biosynthesis O-methyltransferase of Rhodopseudomonas palustris (strain BisB5).